We begin with the raw amino-acid sequence, 803 residues long: Pesticidal crystal protein Cry13Aa (803 aa).

The protein belongs to the delta endotoxin family.

In terms of biological role, endotoxin with nematicidal activity. The protein is Pesticidal crystal protein Cry13Aa (cry13Aa) of Bacillus thuringiensis.